A 209-amino-acid chain; its full sequence is Orotate phosphoribosyltransferase (209 aa).

5-phospho-alpha-D-ribose 1-diphosphate-binding positions include R96, K100, H102, and 122–130; that span reads EDLISTGGS. S126 provides a ligand contact to orotate.

This sequence belongs to the purine/pyrimidine phosphoribosyltransferase family. PyrE subfamily. Homodimer. The cofactor is Mg(2+).

The catalysed reaction is orotidine 5'-phosphate + diphosphate = orotate + 5-phospho-alpha-D-ribose 1-diphosphate. It participates in pyrimidine metabolism; UMP biosynthesis via de novo pathway; UMP from orotate: step 1/2. Catalyzes the transfer of a ribosyl phosphate group from 5-phosphoribose 1-diphosphate to orotate, leading to the formation of orotidine monophosphate (OMP). The chain is Orotate phosphoribosyltransferase from Streptococcus pyogenes serotype M1.